The sequence spans 189 residues: Large ribosomal subunit protein bL9 (189 aa).

It belongs to the bacterial ribosomal protein bL9 family.

In terms of biological role, binds to the 23S rRNA. The sequence is that of Large ribosomal subunit protein bL9 from Cereibacter sphaeroides (strain ATCC 17025 / ATH 2.4.3) (Rhodobacter sphaeroides).